Reading from the N-terminus, the 449-residue chain is Uridine-cytidine kinase C (449 aa).

58–65 lines the ATP pocket; the sequence is GPSGAGKT. The CYTH domain occupies 235–401; the sequence is NPIYILKSVK…QKSYIELYQD (167 aa).

This sequence belongs to the uridine kinase family.

The catalysed reaction is uridine + ATP = UMP + ADP + H(+). The enzyme catalyses cytidine + ATP = CMP + ADP + H(+). It participates in pyrimidine metabolism; CTP biosynthesis via salvage pathway; CTP from cytidine: step 1/3. It functions in the pathway pyrimidine metabolism; UMP biosynthesis via salvage pathway; UMP from uridine: step 1/1. Catalyzes the conversion of uridine into uridine monophosphate and cytidine into cytidine monophosphate in the pyrimidine salvage pathway. The sequence is that of Uridine-cytidine kinase C (udkC) from Dictyostelium discoideum (Social amoeba).